Consider the following 314-residue polypeptide: MKKRAGIWAALLLAAVMLAGCGNPADQKDSKAKQKTEVFPVTIDDASNQDVTIKKEPKKIVSLMPSNTEITYALGLGDKVVGVTTNDTYPKEVKKVEKVGDMNVNVEKVISLKPDLVLAHESSMSASADAIKQLKDAGITVLTVNDAQSFSEVYKSIEMIGEAGGAEKKADQLVKSMKSDLKDIQEKAKTISKDEEKSVFIEVSPDPDIYTTGKDTFMNEMLNVIHAKNAAADQTGWVQMTDEAIVKLNPDAIVTTDGVKAKAVEKRDGWSEINAVKHHRVYDVDPDLVTRSGPRLIEGVEELAESIYPDTFKE.

Residues 1–20 (MKKRAGIWAALLLAAVMLAG) form the signal peptide. The N-palmitoyl cysteine moiety is linked to residue cysteine 21. A lipid anchor (S-diacylglycerol cysteine) is attached at cysteine 21. A Fe/B12 periplasmic-binding domain is found at 59 to 311 (KIVSLMPSNT…ELAESIYPDT (253 aa)).

It belongs to the bacterial solute-binding protein 8 family. In terms of assembly, the complex is composed of two ATP-binding proteins (YvrA), two transmembrane proteins (YvrB) and a solute-binding protein (YvrC).

It is found in the cell membrane. Probably part of an ABC transporter complex. This is an uncharacterized protein from Bacillus subtilis (strain 168).